Reading from the N-terminus, the 627-residue chain is Coiled-coil domain-containing protein 22 (627 aa).

Residues 1–321 form a sufficient for interaction with COMMD1 region; that stretch reads MEEADRILIH…VADIPAASQR (321 aa). The sufficicient and required for interaction with CCDC93 stretch occupies residues 1–447; that stretch reads MEEADRILIH…LQDCRELESS (447 aa). Residues 321–384 adopt a coiled-coil conformation; that stretch reads RPEQDTRAAQ…SVAEQEQALR (64 aa). Serine 410 carries the post-translational modification Phosphoserine. The stretch at 448-535 forms a coiled coil; sequence RRLVEIQELH…NSLSGKLDRT (88 aa).

The protein belongs to the CCDC22 family. As to quaternary structure, component of the commander complex consisting of the CCC subcomplex and the retriever subcomplex. Component of the CCC (COMMD/CCDC22/CCDC93) subcomplex consisting of COMMD1, COMMD2, COMMD3, COMMD4, COMMD5, COMMD6, COMMD7, COMMD8, COMMD9, COMMD10, CCDC22 and CCDC93. Forms a coiled-coil heterodimer with CCDC22; this heterodimer interacts with the guanine nucleotide exchange factor DENND10; the interaction is direct. Interacts with CUL1, CUL2, CUL3, SKP1, BTRC. Interacts with SNX17 and SNX31. Interacts with CPNE1 and CPNE4.

It is found in the endosome. The protein resides in the cytoplasm. Its subcellular location is the cytoskeleton. It localises to the microtubule organizing center. The protein localises to the centrosome. Component of the commander complex that is essential for endosomal recycling of transmembrane cargos; the Commander complex is composed of composed of the CCC subcomplex and the retriever subcomplex. Component of the CCC complex, which is involved in the regulation of endosomal recycling of surface proteins, including integrins, signaling receptor and channels. Involved in regulation of NF-kappa-B signaling. Promotes ubiquitination of I-kappa-B-kinase subunit IKBKB and its subsequent proteasomal degradation leading to NF-kappa-B activation; the function may involve association with COMMD8 and a CUL1-dependent E3 ubiquitin ligase complex. May down-regulate NF-kappa-B activity via association with COMMD1 and involving a CUL2-dependent E3 ubiquitin ligase complex. Regulates the cellular localization of COMM domain-containing proteins, such as COMMD1 and COMMD10. Component of the CCC complex, which is involved in the regulation of endosomal recycling of surface proteins, including integrins, signaling receptor and channels. The CCC complex associates with SNX17, retriever and WASH complexes to prevent lysosomal degradation and promote cell surface recycling of numerous cargos such as integrins ITGA5:ITGB1. Plays a role in copper ion homeostasis. Involved in copper-dependent ATP7A trafficking between the trans-Golgi network and vesicles in the cell periphery; the function is proposed to depend on its association within the CCC complex and cooperation with the WASH complex on early endosomes. In Rattus norvegicus (Rat), this protein is Coiled-coil domain-containing protein 22.